The following is a 489-amino-acid chain: Rhamnulokinase (489 aa).

13 to 17 contributes to the ATP binding site; sequence ASSGR. An intrachain disulfide couples C68 to C222. Substrate-binding positions include G83 and 236 to 238; that span reads HDT. D237 serves as the catalytic Proton acceptor. T259 provides a ligand contact to ATP. N296 provides a ligand contact to substrate. Q304 contributes to the ATP binding site. A disulfide bond links C353 and C370. G402 contacts ATP. C413 and C417 are disulfide-bonded.

This sequence belongs to the rhamnulokinase family. The cofactor is Mg(2+).

It catalyses the reaction L-rhamnulose + ATP = L-rhamnulose 1-phosphate + ADP + H(+). Its pathway is carbohydrate degradation; L-rhamnose degradation; glycerone phosphate from L-rhamnose: step 2/3. Functionally, involved in the catabolism of L-rhamnose (6-deoxy-L-mannose). Catalyzes the transfer of the gamma-phosphate group from ATP to the 1-hydroxyl group of L-rhamnulose to yield L-rhamnulose 1-phosphate. The sequence is that of Rhamnulokinase from Salmonella enteritidis PT4 (strain P125109).